The sequence spans 262 residues: TLC domain-containing protein 4-B (262 aa).

The next 6 membrane-spanning stretches (helical) occupy residues 6–26 (PLTV…FHVG), 53–73 (TVSS…LVYD), 90–110 (LNVA…IYYW), 122–142 (HLAA…PYFG), 177–197 (GVLM…IYYG), and 218–238 (AWII…IKIA). Residues 44–246 (RQKIEWNSRT…IAKGCYKVLY (203 aa)) form the TLC domain.

Belongs to the TLCD4 family.

It localises to the membrane. The protein is TLC domain-containing protein 4-B (tlcd4-b) of Xenopus laevis (African clawed frog).